Reading from the N-terminus, the 65-residue chain is Small hydrophobic protein (65 aa).

The Intravirion portion of the chain corresponds to 1–20 (MGNTSITIEFTSKFWPYFTL). Residues 6–15 (ITIEFTSKFW) are interaction with host BCAP31. The helical; Signal-anchor for type II membrane protein transmembrane segment at 21–44 (IHMILTLISLLIIITIMIAILNKL) threads the bilayer. The segment at 38–43 (IAILNK) is interaction with small-molecule inhibitor. Residues 45–65 (SEHKTFCNNTLELGQMHQINT) are Virion surface-facing. Residue Asn-52 is glycosylated (N-linked (GlcNAc...) asparagine; by host).

It belongs to the orthopneumovirus small hydrophobic protein family. Homopentamer forming a funnel-like pore. Interacts with glycoprotein G; this interaction occurs on the surface of virion particles and infected cells. Interacts with host BCAP31 (via C-terminus); this interaction is direct. Four species of SH have been detected in infected cell cytoplasm: a 7.5 kDa non-glycosylated form (SH0), a 13-15 kDa form that contains one or two N-linked carbohydrate side chains of the high-mannose type (SHg), a 21-30 kDa polylactosaminoglycan-modified form of the protein (SHp), and the isoform generated by alternative translational initiation. Of these different forms, SH0 is by far the most abundant protein detected during virus infection. In terms of processing, tyrosine phosphorylated.

It localises to the virion membrane. The protein resides in the host cell membrane. Its subcellular location is the host Golgi apparatus membrane. It is found in the host endoplasmic reticulum membrane. Channel activity is inhibited by copper. Also inhibited by small-molecule pyronin B. Viroporin that forms a homopentameric ion channel displaying low ion selectivity. May play a role in virus morphogenesis and pathogenicity at various stages of the viral life cycle. Accumulates at the membrane of the Golgi apparatus in infected cells and may facilitate virus release by modifying the secretory pathway. May enhance host membrane permeability and disrupt cellular ion homeostasis, which can be sensed as damage-associated molecular patterns/danger signals, triggering NLRP3 inflammasome activation and inflammatory immune response. Also inhibits host TNFA-mediated signaling pathway and may delay apoptosis, allowing time for the virus to replicate. The chain is Small hydrophobic protein from Homo sapiens (Human).